A 599-amino-acid polypeptide reads, in one-letter code: Elongation factor 4 (599 aa).

Residues K2–E184 form the tr-type G domain. GTP contacts are provided by residues D14–T19 and N131–D134.

Belongs to the TRAFAC class translation factor GTPase superfamily. Classic translation factor GTPase family. LepA subfamily.

Its subcellular location is the cell inner membrane. The catalysed reaction is GTP + H2O = GDP + phosphate + H(+). Required for accurate and efficient protein synthesis under certain stress conditions. May act as a fidelity factor of the translation reaction, by catalyzing a one-codon backward translocation of tRNAs on improperly translocated ribosomes. Back-translocation proceeds from a post-translocation (POST) complex to a pre-translocation (PRE) complex, thus giving elongation factor G a second chance to translocate the tRNAs correctly. Binds to ribosomes in a GTP-dependent manner. The sequence is that of Elongation factor 4 from Escherichia coli O8 (strain IAI1).